The sequence spans 801 residues: MHHRMNEMNLSPVGMEQLTSSSVSNALPVSGSHLGLAASPTHSAIPAPGLPVAIPNLGPSLSSLPSALSLMLPMGIGDRGVMCGLPERNYTLPPPPYPHLESSYFRTILPGILSYLADRPPPQYIHPNSINVDGNTALSITNNASALDPYQSNGNVGLEPGIVSIDSRSVNTHGAQSLHPSDGHEVALDTAITMENVSRVTSPISTDGMAEELTMDGVAGEHSQIPNGSRSHEPLSVDSVSNNLAADAVGHGGVIPMHGNGLELPVVMETDHIASRVNGMSDSALSDSIHTVAMSTNSVSVALSTSHNLASLESVSLHEVGLSLEPVAVSSITQEVAMGTGHVDVSSDSLSFVPPSLQMEDSNSNKENMATLFTIWCTLCDRAYPSDCPEHGPVTFVPDTPIESRARLSLPKQLVLRQSIVGAEVGVWTGETIPVRTCFGPLIGQQSHSMEVAEWTDKAVNHIWKIYHNGVLEFCIITADENECNWMMFVRKARNREEQNLVAYPHDGKIFFCTSQDIPPENELLFYYSRDYAQQIGVPEHPDVHLCNCGKECNSYTEFKAHLTSHIHNHLPTQGHSGSHGPSHSKERKWKCSMCPQAFISPSKLHVHFMGHMGMKPHKCDFCSKAFSDPSNLRTHLKIHTGQKNYRCTLCDKSFTQKAHLESHMVIHTGEKNLKCDYCDKLFMRRQDLKQHVLIHTQERQIKCPKCDKLFLRTNHLKKHLNSHEGKRDYVCEKCTKAYLTKYHLTRHLKTCKGPTSSSSAPEEEEEDDSEEEDLADSVGTEDCRINSAVYSADESLSAHK.

The SET domain maps to 412–529; sequence KQLVLRQSIV…PENELLFYYS (118 aa). The segment at 545–566 adopts a C2H2-type 1; atypical zinc-finger fold; it reads HLCNCGKECNSYTEFKAHLTSH. 4 consecutive C2H2-type zinc fingers follow at residues 618-640, 646-668, 674-696, and 702-724; these read HKCDFCSKAFSDPSNLRTHLKIH, YRCTLCDKSFTQKAHLESHMVIH, LKCDYCDKLFMRRQDLKQHVLIH, and IKCPKCDKLFLRTNHLKKHLNSH. The C2H2-type 6; atypical zinc-finger motif lies at 730 to 752; the sequence is YVCEKCTKAYLTKYHLTRHLKTC. The tract at residues 751–782 is disordered; it reads TCKGPTSSSSAPEEEEEDDSEEEDLADSVGTE. The span at 762-776 shows a compositional bias: acidic residues; the sequence is PEEEEEDDSEEEDLA.

The protein belongs to the class V-like SAM-binding methyltransferase superfamily.

The protein localises to the nucleus. Its function is as follows. May function as a transcription factor involved in cell differentiation. The polypeptide is PR domain zinc finger protein 4 (PRDM4) (Pongo abelii (Sumatran orangutan)).